A 919-amino-acid chain; its full sequence is UPF0182 protein SUN_1015 (919 aa).

Helical transmembrane passes span 8–28 (IIIT…VDYY), 51–71 (ILSF…HIHF), 102–122 (AVAW…GSYA), 158–178 (VYQF…IGVL), 207–227 (LTAF…YNIL), 246–266 (IPAY…LFFY), and 274–294 (VIVS…WIYP).

The protein belongs to the UPF0182 family.

It is found in the cell membrane. The chain is UPF0182 protein SUN_1015 from Sulfurovum sp. (strain NBC37-1).